The sequence spans 470 residues: Acetyl-CoA decarbonylase/synthase complex subunit gamma 1 (470 aa).

The 60-residue stretch at 1–60 (MKINSPLEAYKYLPQTNCGECGQPTCMAFASTLIDRSGKTTDCPPLIKEKKFAKKLAELD) folds into the 4Fe-4S domain. The [4Fe-4S] cluster site is built by cysteine 18, cysteine 21, cysteine 26, and cysteine 43.

Heterodimer of delta and gamma chains. The ACDS complex is made up of alpha, epsilon, beta, gamma and delta chains with a probable stoichiometry of (alpha(2)epsilon(2))(4)-beta(8)-(gamma(1)delta(1))(8). Requires corrinoid as cofactor. It depends on [4Fe-4S] cluster as a cofactor.

The catalysed reaction is 5,6,7,8-tetrahydrosarcinapterin + methyl-Co(III)-[corrinoid Fe-S protein] = 5-methyltetrahydrosarcinapterin + Co(I)-[corrinoid Fe-S protein] + H(+). It participates in one-carbon metabolism; methanogenesis from acetate. Its function is as follows. Part of a complex that catalyzes the reversible cleavage of acetyl-CoA, allowing growth on acetate as sole source of carbon and energy. In Methanosarcina mazei (strain ATCC BAA-159 / DSM 3647 / Goe1 / Go1 / JCM 11833 / OCM 88) (Methanosarcina frisia), this protein is Acetyl-CoA decarbonylase/synthase complex subunit gamma 1.